A 66-amino-acid polypeptide reads, in one-letter code: Large ribosomal subunit protein bL33 (66 aa).

This sequence belongs to the bacterial ribosomal protein bL33 family.

The polypeptide is Large ribosomal subunit protein bL33 (Synechococcus sp. (strain CC9902)).